A 375-amino-acid polypeptide reads, in one-letter code: Alanine racemase (375 aa).

The active-site Proton acceptor; specific for D-alanine is the Lys35. Lys35 carries the post-translational modification N6-(pyridoxal phosphate)lysine. Residue Arg133 participates in substrate binding. The active-site Proton acceptor; specific for L-alanine is Tyr261. Met309 contacts substrate.

Belongs to the alanine racemase family. The cofactor is pyridoxal 5'-phosphate.

It carries out the reaction L-alanine = D-alanine. It functions in the pathway amino-acid biosynthesis; D-alanine biosynthesis; D-alanine from L-alanine: step 1/1. In terms of biological role, catalyzes the interconversion of L-alanine and D-alanine. May also act on other amino acids. This chain is Alanine racemase (alr), found in Syntrophobacter fumaroxidans (strain DSM 10017 / MPOB).